The following is a 508-amino-acid chain: Glycogen synthase (508 aa).

K27 lines the ADP-alpha-D-glucose pocket.

The protein belongs to the glycosyltransferase 1 family. Bacterial/plant glycogen synthase subfamily.

The enzyme catalyses [(1-&gt;4)-alpha-D-glucosyl](n) + ADP-alpha-D-glucose = [(1-&gt;4)-alpha-D-glucosyl](n+1) + ADP + H(+). It participates in glycan biosynthesis; glycogen biosynthesis. Synthesizes alpha-1,4-glucan chains using ADP-glucose. The protein is Glycogen synthase of Photobacterium profundum (strain SS9).